The chain runs to 212 residues: ER lumen protein-retaining receptor 1-B (212 aa).

The Lumenal portion of the chain corresponds to 1-4 (MNIF). The chain crosses the membrane as a helical span at residues 5-24 (RFLGDISHLSAIIILLLKIW). The Cytoplasmic portion of the chain corresponds to 25 to 32 (KSRSCAGI). A helical membrane pass occupies residues 33-52 (SGKSQLLFAIVFTTRYLDLF). Residues 47-48 (RY) form an interaction with the K-D-E-L motif on target proteins region. Residues 53–58 (TNFISF) are Lumenal-facing. The chain crosses the membrane as a helical span at residues 59–79 (YNTSMKVVYVASSYATVWMIY). Over 80–92 (SKFKATYDGNHDT) the chain is Cytoplasmic. A helical transmembrane segment spans residues 93-110 (FRVEFLIVPTAILSFLVN). The Lumenal segment spans residues 111-116 (HDFTPL). Residues 117 to 135 (EILWTFSIYLESVAILPQL) form a helical membrane-spanning segment. Over 136 to 149 (FMVSKTGEAETITS) the chain is Cytoplasmic. The chain crosses the membrane as a helical span at residues 150-168 (HYLFALGIYRTLYLFNWIW). The segment at 159-169 (RTLYLFNWIWR) is interaction with the K-D-E-L motif on target proteins. Residues 169 to 178 (RYQFEEFFDL) lie on the Lumenal side of the membrane. A helical membrane pass occupies residues 179–199 (IAIVAGLVQTVLYCDFFYLYI). Residues 200–212 (TKVLKGKKLSLPA) are Cytoplasmic-facing. Residues 204 to 207 (KGKK) are important for recycling of cargo proteins with the sequence motif K-D-E-L from the Golgi to the endoplasmic reticulum.

Belongs to the ERD2 family.

Its subcellular location is the golgi apparatus membrane. It localises to the cytoplasmic vesicle. It is found in the COPI-coated vesicle membrane. The protein localises to the endoplasmic reticulum membrane. The protein resides in the endoplasmic reticulum-Golgi intermediate compartment membrane. Functionally, receptor for the C-terminal sequence motif K-D-E-L that is present on endoplasmic reticulum resident proteins and that mediates their recycling from the Golgi back to the endoplasmic reticulum. This chain is ER lumen protein-retaining receptor 1-B (kdelr1-b), found in Xenopus laevis (African clawed frog).